Consider the following 153-residue polypeptide: Endoribonuclease YbeY (153 aa).

H113, H117, and H123 together coordinate Zn(2+).

This sequence belongs to the endoribonuclease YbeY family. Zn(2+) serves as cofactor.

The protein localises to the cytoplasm. Its function is as follows. Single strand-specific metallo-endoribonuclease involved in late-stage 70S ribosome quality control and in maturation of the 3' terminus of the 16S rRNA. This chain is Endoribonuclease YbeY, found in Aliivibrio fischeri (strain ATCC 700601 / ES114) (Vibrio fischeri).